Reading from the N-terminus, the 281-residue chain is Nucleotide-binding protein Daro_0070 (281 aa).

Position 8–15 (8–15 (GLSGSGKS)) interacts with ATP. 57–60 (DARS) contacts GTP.

Belongs to the RapZ-like family.

Functionally, displays ATPase and GTPase activities. The polypeptide is Nucleotide-binding protein Daro_0070 (Dechloromonas aromatica (strain RCB)).